The sequence spans 359 residues: Phospho-N-acetylmuramoyl-pentapeptide-transferase (359 aa).

Helical transmembrane passes span 3 to 23, 53 to 73, 84 to 104, 117 to 137, 156 to 176, 187 to 207, 231 to 251, 255 to 275, 283 to 303, and 330 to 350; these read QILF…PVLI, GGVA…LIGI, GLLV…DDFI, TAKL…ALQF, IATV…LVSA, LDGL…IITF, LALI…WNAA, IFMG…LSIT, VVIG…VAVF, and VIIR…ALFY.

This sequence belongs to the glycosyltransferase 4 family. MraY subfamily. It depends on Mg(2+) as a cofactor.

Its subcellular location is the cell membrane. It catalyses the reaction UDP-N-acetyl-alpha-D-muramoyl-L-alanyl-gamma-D-glutamyl-meso-2,6-diaminopimeloyl-D-alanyl-D-alanine + di-trans,octa-cis-undecaprenyl phosphate = di-trans,octa-cis-undecaprenyl diphospho-N-acetyl-alpha-D-muramoyl-L-alanyl-D-glutamyl-meso-2,6-diaminopimeloyl-D-alanyl-D-alanine + UMP. The protein operates within cell wall biogenesis; peptidoglycan biosynthesis. Catalyzes the initial step of the lipid cycle reactions in the biosynthesis of the cell wall peptidoglycan: transfers peptidoglycan precursor phospho-MurNAc-pentapeptide from UDP-MurNAc-pentapeptide onto the lipid carrier undecaprenyl phosphate, yielding undecaprenyl-pyrophosphoryl-MurNAc-pentapeptide, known as lipid I. This is Phospho-N-acetylmuramoyl-pentapeptide-transferase from Rhodococcus jostii (strain RHA1).